Consider the following 233-residue polypeptide: Small ribosomal subunit protein uS3 (233 aa).

The KH type-2 domain maps to 28-96 (EFADNLDSDF…LRKVVADIAG (69 aa)).

It belongs to the universal ribosomal protein uS3 family. In terms of assembly, part of the 30S ribosomal subunit. Forms a tight complex with proteins S10 and S14.

Functionally, binds the lower part of the 30S subunit head. Binds mRNA in the 70S ribosome, positioning it for translation. The protein is Small ribosomal subunit protein uS3 of Shigella flexneri.